A 73-amino-acid chain; its full sequence is Translation initiation factor IF-1 (73 aa).

In terms of domain architecture, S1-like spans 1 to 73 (MANKEELIEF…TKGRITYRAR (73 aa)).

The protein belongs to the IF-1 family. In terms of assembly, component of the 30S ribosomal translation pre-initiation complex which assembles on the 30S ribosome in the order IF-2 and IF-3, IF-1 and N-formylmethionyl-tRNA(fMet); mRNA recruitment can occur at any time during PIC assembly.

The protein localises to the cytoplasm. Its function is as follows. One of the essential components for the initiation of protein synthesis. Stabilizes the binding of IF-2 and IF-3 on the 30S subunit to which N-formylmethionyl-tRNA(fMet) subsequently binds. Helps modulate mRNA selection, yielding the 30S pre-initiation complex (PIC). Upon addition of the 50S ribosomal subunit IF-1, IF-2 and IF-3 are released leaving the mature 70S translation initiation complex. The polypeptide is Translation initiation factor IF-1 (Acinetobacter baumannii (strain ATCC 17978 / DSM 105126 / CIP 53.77 / LMG 1025 / NCDC KC755 / 5377)).